The primary structure comprises 425 residues: WD repeat-containing protein JIP5 (425 aa).

WD repeat units follow at residues 9-48 (QLDS…SDDS), 71-110 (RHKG…VTAK), 117-158 (LANG…AKSA), 219-262 (ELLS…DQDE), and 321-358 (LRQE…DVPE). Positions 354 to 425 (QDVPEDDEDE…HGILHFSGLA (72 aa)) are disordered. Acidic residues-rich tracts occupy residues 356-368 (VPED…EEEA) and 378-396 (SDED…EDDE). The segment covering 399-414 (QKRKKRRKGKGGKQAK) has biased composition (basic residues).

Belongs to the WD repeat WDR55 family.

Its subcellular location is the nucleus. It is found in the nucleolus. In Phaeosphaeria nodorum (strain SN15 / ATCC MYA-4574 / FGSC 10173) (Glume blotch fungus), this protein is WD repeat-containing protein JIP5 (JIP5).